Here is a 478-residue protein sequence, read N- to C-terminus: UDP-N-acetylmuramate--L-alanine ligase (478 aa).

Position 120–126 (120–126 (GSHGKTT)) interacts with ATP.

The protein belongs to the MurCDEF family.

Its subcellular location is the cytoplasm. It catalyses the reaction UDP-N-acetyl-alpha-D-muramate + L-alanine + ATP = UDP-N-acetyl-alpha-D-muramoyl-L-alanine + ADP + phosphate + H(+). It participates in cell wall biogenesis; peptidoglycan biosynthesis. In terms of biological role, cell wall formation. This chain is UDP-N-acetylmuramate--L-alanine ligase, found in Rickettsia felis (strain ATCC VR-1525 / URRWXCal2) (Rickettsia azadi).